We begin with the raw amino-acid sequence, 92 residues long: Small ribosomal subunit protein uS19 (92 aa).

The protein belongs to the universal ribosomal protein uS19 family.

Its function is as follows. Protein S19 forms a complex with S13 that binds strongly to the 16S ribosomal RNA. The sequence is that of Small ribosomal subunit protein uS19 from Bartonella quintana (strain Toulouse) (Rochalimaea quintana).